Here is a 322-residue protein sequence, read N- to C-terminus: Sideroflexin-1 (322 aa).

N-acetylserine is present on Ser2. The Mitochondrial matrix segment spans residues 2-102; that stretch reads SGEVPPNINI…MSAQVPMNMT (101 aa). Residues 103-120 traverse the membrane as a helical segment; the sequence is ITGCMMTFYRTTPAVLFW. Residues 121 to 146 are Mitochondrial intermembrane-facing; that stretch reads QWINQSFNAVVNYTNRSGDAPLTVNE. A helical transmembrane segment spans residues 147 to 167; sequence LGTAYVSATTGAVATALGLNA. At 168-174 the chain is on the mitochondrial matrix side; sequence LTKRVSP. A helical transmembrane segment spans residues 175–195; that stretch reads LIGRFVPFAAVAAANCINIPL. Over 196-228 the chain is Mitochondrial intermembrane; sequence MRQRELKVGIPVTDENGTRLGESTNAAKQAITQ. The chain crosses the membrane as a helical span at residues 229–249; the sequence is VVISRILMAAPGMAIPPFIMN. At 250-266 the chain is on the mitochondrial matrix side; that stretch reads TLEKKAFLKRFPWMSAP. A helical membrane pass occupies residues 267 to 287; sequence IQVTLVGFCLVFATPLCCALF. Over 288 to 322 the chain is Mitochondrial intermembrane; the sequence is PQKSSMSVTSLEDELQASIQRTHPEIRRVYFNKGL.

It belongs to the sideroflexin family. As to expression, widely expressed, with highest expression in kidney and liver.

The protein localises to the mitochondrion inner membrane. It carries out the reaction L-serine(in) = L-serine(out). It catalyses the reaction L-alanine(in) = L-alanine(out). The catalysed reaction is L-cysteine(in) = L-cysteine(out). Amino acid transporter importing serine, an essential substrate of the mitochondrial branch of the one-carbon pathway, into mitochondria. Mitochondrial serine is then converted to glycine and formate, which exits to the cytosol where it is used to generate the charged folates that serve as one-carbon donors. May also transport other amino acids including alanine and cysteine. The polypeptide is Sideroflexin-1 (Mus musculus (Mouse)).